Consider the following 94-residue polypeptide: Acylphosphatase (94 aa).

The 87-residue stretch at Arg-6 to Pro-92 folds into the Acylphosphatase-like domain. Catalysis depends on residues Arg-21 and Asn-39.

It belongs to the acylphosphatase family.

The enzyme catalyses an acyl phosphate + H2O = a carboxylate + phosphate + H(+). The sequence is that of Acylphosphatase (acyP) from Synechococcus sp. (strain JA-2-3B'a(2-13)) (Cyanobacteria bacterium Yellowstone B-Prime).